Reading from the N-terminus, the 150-residue chain is Cytochrome c oxidase subunit 5A, mitochondrial (150 aa).

A mitochondrion-targeting transit peptide spans 1 to 41 (MLGAALRRCAVAATTWAGPRGHLHSARTPGPAAAIQSVRCY). Residues 2 to 17 (LGAALRRCAVAATTWA) carry the SIFI-degron motif. An N6-acetyllysine mark is found at Lys87 and Lys113. A Phosphothreonine modification is found at Thr141.

The protein belongs to the cytochrome c oxidase subunit 5A family. As to quaternary structure, component of the cytochrome c oxidase (complex IV, CIV), a multisubunit enzyme composed of 14 subunits. The complex is composed of a catalytic core of 3 subunits MT-CO1, MT-CO2 and MT-CO3, encoded in the mitochondrial DNA, and 11 supernumerary subunits COX4I, COX5A, COX5B, COX6A, COX6B, COX6C, COX7A, COX7B, COX7C, COX8 and NDUFA4, which are encoded in the nuclear genome. The complex exists as a monomer or a dimer and forms supercomplexes (SCs) in the inner mitochondrial membrane with NADH-ubiquinone oxidoreductase (complex I, CI) and ubiquinol-cytochrome c oxidoreductase (cytochrome b-c1 complex, complex III, CIII), resulting in different assemblies (supercomplex SCI(1)III(2)IV(1) and megacomplex MCI(2)III(2)IV(2)). Interacts with AFG1L. Interacts with RAB5IF. In response to mitochondrial stress, the precursor protein is ubiquitinated by the SIFI complex in the cytoplasm before mitochondrial import, leading to its degradation. Within the SIFI complex, UBR4 initiates ubiquitin chain that are further elongated or branched by KCMF1.

It is found in the mitochondrion inner membrane. It participates in energy metabolism; oxidative phosphorylation. Component of the cytochrome c oxidase, the last enzyme in the mitochondrial electron transport chain which drives oxidative phosphorylation. The respiratory chain contains 3 multisubunit complexes succinate dehydrogenase (complex II, CII), ubiquinol-cytochrome c oxidoreductase (cytochrome b-c1 complex, complex III, CIII) and cytochrome c oxidase (complex IV, CIV), that cooperate to transfer electrons derived from NADH and succinate to molecular oxygen, creating an electrochemical gradient over the inner membrane that drives transmembrane transport and the ATP synthase. Cytochrome c oxidase is the component of the respiratory chain that catalyzes the reduction of oxygen to water. Electrons originating from reduced cytochrome c in the intermembrane space (IMS) are transferred via the dinuclear copper A center (CU(A)) of subunit 2 and heme A of subunit 1 to the active site in subunit 1, a binuclear center (BNC) formed by heme A3 and copper B (CU(B)). The BNC reduces molecular oxygen to 2 water molecules using 4 electrons from cytochrome c in the IMS and 4 protons from the mitochondrial matrix. The chain is Cytochrome c oxidase subunit 5A, mitochondrial (COX5A) from Symphalangus syndactylus (Siamang).